We begin with the raw amino-acid sequence, 189 residues long: Der GTPase-activating protein YihI (189 aa).

A disordered region spans residues 1–81; the sequence is MARKKKTRRV…ALAKKDPRLG (81 aa). 2 stretches are compositionally biased toward basic and acidic residues: residues 9 to 27 and 35 to 46; these read RVSD…ELPK and TRYELDAKARED. Residues 60–71 show a composition bias toward polar residues; the sequence is RHSATENNNNHQ.

It belongs to the YihI family. Interacts with Der.

Functionally, a GTPase-activating protein (GAP) that modifies Der/EngA GTPase function. May play a role in ribosome biogenesis. The sequence is that of Der GTPase-activating protein YihI from Pasteurella multocida (strain Pm70).